The primary structure comprises 511 residues: Mannosyl-oligosaccharide alpha-1,2-mannosidase (511 aa).

An N-terminal signal peptide occupies residues 1 to 35 (MRLPVSFPLTVLSLLGSTIAHPYGETEAVLRSEPK). Asn-182 carries N-linked (GlcNAc...) asparagine glycosylation. The cysteines at positions 332 and 361 are disulfide-linked. N-linked (GlcNAc...) asparagine glycosylation occurs at Asn-366. Asp-375 functions as the Proton donor in the catalytic mechanism. A glycan (N-linked (GlcNAc...) asparagine) is linked at Asn-438. Residue Thr-501 participates in Ca(2+) binding.

This sequence belongs to the glycosyl hydrolase 47 family. As to quaternary structure, homodimer. Requires Ca(2+) as cofactor.

The protein resides in the secreted. It catalyses the reaction N(4)-(alpha-D-Man-(1-&gt;2)-alpha-D-Man-(1-&gt;2)-alpha-D-Man-(1-&gt;3)-[alpha-D-Man-(1-&gt;2)-alpha-D-Man-(1-&gt;3)-[alpha-D-Man-(1-&gt;2)-alpha-D-Man-(1-&gt;6)]-alpha-D-Man-(1-&gt;6)]-beta-D-Man-(1-&gt;4)-beta-D-GlcNAc-(1-&gt;4)-beta-D-GlcNAc)-L-asparaginyl-[protein] (N-glucan mannose isomer 9A1,2,3B1,2,3) + 4 H2O = N(4)-(alpha-D-Man-(1-&gt;3)-[alpha-D-Man-(1-&gt;3)-[alpha-D-Man-(1-&gt;6)]-alpha-D-Man-(1-&gt;6)]-beta-D-Man-(1-&gt;4)-beta-D-GlcNAc-(1-&gt;4)-beta-D-GlcNAc)-L-asparaginyl-[protein] (N-glucan mannose isomer 5A1,2) + 4 beta-D-mannose. The enzyme catalyses N(4)-(alpha-D-Man-(1-&gt;2)-alpha-D-Man-(1-&gt;2)-alpha-D-Man-(1-&gt;3)-[alpha-D-Man-(1-&gt;3)-[alpha-D-Man-(1-&gt;2)-alpha-D-Man-(1-&gt;6)]-alpha-D-Man-(1-&gt;6)]-beta-D-Man-(1-&gt;4)-beta-D-GlcNAc-(1-&gt;4)-beta-D-GlcNAc)-L-asparaginyl-[protein] (N-glucan mannose isomer 8A1,2,3B1,3) + 3 H2O = N(4)-(alpha-D-Man-(1-&gt;3)-[alpha-D-Man-(1-&gt;3)-[alpha-D-Man-(1-&gt;6)]-alpha-D-Man-(1-&gt;6)]-beta-D-Man-(1-&gt;4)-beta-D-GlcNAc-(1-&gt;4)-beta-D-GlcNAc)-L-asparaginyl-[protein] (N-glucan mannose isomer 5A1,2) + 3 beta-D-mannose. It participates in protein modification; protein glycosylation. Its function is as follows. Involved in the maturation of Asn-linked oligosaccharides. Progressively trim alpha-1,2-linked mannose residues from Man(9)GlcNAc(2) to produce Man(5)GlcNAc(2). The polypeptide is Mannosyl-oligosaccharide alpha-1,2-mannosidase (MSDC) (Penicillium citrinum).